Here is a 74-residue protein sequence, read N- to C-terminus: RNA-binding protein Hfq (74 aa).

In terms of domain architecture, Sm spans 9-69 (DQFLNQLRKD…ISTFAPEKNV (61 aa)).

This sequence belongs to the Hfq family. In terms of assembly, homohexamer.

In terms of biological role, RNA chaperone that binds small regulatory RNA (sRNAs) and mRNAs to facilitate mRNA translational regulation in response to envelope stress, environmental stress and changes in metabolite concentrations. Also binds with high specificity to tRNAs. This is RNA-binding protein Hfq from Geobacillus sp. (strain WCH70).